We begin with the raw amino-acid sequence, 1296 residues long: Aggregation substance (1296 aa).

The first 43 residues, 1 to 43, serve as a signal peptide directing secretion; that stretch reads MKQQTEVKKRFKMYKAKKHWVVAPILFIGVLGVVGLATDDVQA. 2 disordered regions span residues 48 to 188 and 1221 to 1245; these read TQPG…KPAE and HTPEKPQTPPEKTVIVPPTPKTPQA. Residues 89 to 99 are compositionally biased toward basic and acidic residues; it reads KVEEVASEKNG. Polar residues-rich tracts occupy residues 100–117 and 125–138; these read AEQSSATPNDTTNAQQPT and QEQPVVSPETTNEP. Over residues 160 to 178 the composition is skewed to basic and acidic residues; sequence KEFETPDVDKAVDEAKKDP. The LPXTG sorting signal motif lies at 1261 to 1265; that stretch reads LPQTG. Pentaglycyl murein peptidoglycan amidated threonine is present on Thr-1264. The propeptide at 1265 to 1296 is removed by sortase; the sequence is GEKQNVLLTVAGSLAAMLGLAGLGFKRRKETK.

This sequence belongs to the antigen I/II family.

The protein localises to the secreted. It is found in the cell wall. Functionally, aggregation substance allows donor and recipient strains to form tight aggregates which allow the non-motile bacteria to maintain physical contact over a period of time sufficient to permit conjugative transfer of the sex pheromone plasmid from donor to recipient strains. This Enterococcus faecalis (strain ATCC 700802 / V583) protein is Aggregation substance (asa1).